The sequence spans 58 residues: UPF0339 protein TDE_0826 (58 aa).

Belongs to the UPF0339 family.

The polypeptide is UPF0339 protein TDE_0826 (Treponema denticola (strain ATCC 35405 / DSM 14222 / CIP 103919 / JCM 8153 / KCTC 15104)).